Here is a 351-residue protein sequence, read N- to C-terminus: MGHRKLASPRRGSAGLRPRKRSSELLPTPRTWPQINSPNPKLLGFVGYKVGMSHVFMIDDWPNSPTNGKEIYMPVTVLEVPPIIPLALRAYAVDGKGEPNVITEYWSPSSLQFLDITRRIHSLSSFLKNDESKKKFEEKFGSKLDLIKSNLDRIVYFRLLVATQPRKIPSLGKKVPDLVEIQIGGGEKKAQLDYALNVLGKEISIKDVFKEGQLIDVVGVTKGKGFAGVIKRYSVVELPRWHKHRKGSRKIGTRGPSLGTPSYTPQPGQLGFHRRTEYNKRIIKIGDDPKEINPAGGFVRYGIVRNTYILLEGSILGSKKRPIFLREAVRPSYVFENAPKITYVNLLSKQG.

2 disordered regions span residues 1 to 31 (MGHR…TPRT) and 246 to 271 (KGSR…GQLG).

Belongs to the universal ribosomal protein uL3 family. Part of the 50S ribosomal subunit. Forms a cluster with proteins L14 and L24e.

Its function is as follows. One of the primary rRNA binding proteins, it binds directly near the 3'-end of the 23S rRNA, where it nucleates assembly of the 50S subunit. This chain is Large ribosomal subunit protein uL3, found in Saccharolobus islandicus (strain Y.N.15.51 / Yellowstone #2) (Sulfolobus islandicus).